Reading from the N-terminus, the 525-residue chain is Phospho-2-dehydro-3-deoxyheptonate aldolase 1, chloroplastic (525 aa).

A compositionally biased stretch (polar residues) spans 1 to 13; the sequence is MALSNASSLSTRS. Positions 1–35 are disordered; that stretch reads MALSNASSLSTRSIYGGDLSHRPSNRQSSFTFHPA. Residues 1 to 52 constitute a chloroplast transit peptide; it reads MALSNASSLSTRSIYGGDLSHRPSNRQSSFTFHPAVNTKPKSVNLVTAVHAA.

It belongs to the class-II DAHP synthase family.

Its subcellular location is the plastid. It localises to the chloroplast. The catalysed reaction is D-erythrose 4-phosphate + phosphoenolpyruvate + H2O = 7-phospho-2-dehydro-3-deoxy-D-arabino-heptonate + phosphate. It participates in metabolic intermediate biosynthesis; chorismate biosynthesis; chorismate from D-erythrose 4-phosphate and phosphoenolpyruvate: step 1/7. In Arabidopsis thaliana (Mouse-ear cress), this protein is Phospho-2-dehydro-3-deoxyheptonate aldolase 1, chloroplastic (DHS1).